A 55-amino-acid polypeptide reads, in one-letter code: Large ribosomal subunit protein bL33 (55 aa).

It belongs to the bacterial ribosomal protein bL33 family.

The chain is Large ribosomal subunit protein bL33 from Polaromonas sp. (strain JS666 / ATCC BAA-500).